Consider the following 362-residue polypeptide: Tyrosyl-DNA phosphodiesterase 2 (362 aa).

The residue at position 1 (M1) is an N-acetylmethionine. A disordered region spans residues 1 to 20 (MELGSCLEGGREAAEEEGEP). Glycyl lysine isopeptide (Lys-Gly) (interchain with G-Cter in SUMO2) cross-links involve residues K23 and K82. The interval 87–109 (LTNEETTDSTTSKISPSEDTQQE) is disordered. Phosphothreonine; by ACVR1B is present on residues T88 and T92. The span at 94–109 (DSTTSKISPSEDTQQE) shows a compositional bias: polar residues. Phosphoserine is present on S95. The interval 120-124 (NIDGL) is interaction with 5' end of substrate DNA. 2 residues coordinate Mg(2+): D122 and E152. Residues 226–231 (HLESTR) form an interaction with 5' end of substrate DNA region. The active-site Proton donor/acceptor is D262. The interaction with 5' end of substrate DNA stretch occupies residues 264-266 (NLR).

This sequence belongs to the CCR4/nocturin family. In terms of assembly, interacts with TRAF2, TRAF3, TRAF5, TRAF6, TNFRSF8/CD30, TNFRSF5/CD40, TNFRSF1B/TNF-R75, ETS1, ETS2, FLI1, SMAD3 and ACVR1B/ALK4. (Microbial infection) Interacts with Hantaan hantavirus nucleoprotein. As to quaternary structure, (Microbial infection) Interacts with Seoul hantavirus nucleoprotein. Mg(2+) serves as cofactor. Mn(2+) is required as a cofactor. Post-translationally, ubiquitinated by TRAF6. In terms of tissue distribution, widely expressed. Highly expressed in various brain regions, including the frontal and occipital lobes, the hippocampus, the striatum and the cerebellum.

The protein resides in the nucleus. The protein localises to the PML body. It localises to the nucleolus. Its subcellular location is the cytoplasm. DNA repair enzyme that can remove a variety of covalent adducts from DNA through hydrolysis of a 5'-phosphodiester bond, giving rise to DNA with a free 5' phosphate. Catalyzes the hydrolysis of dead-end complexes between DNA and the topoisomerase 2 (TOP2) active site tyrosine residue. The 5'-tyrosyl DNA phosphodiesterase activity can enable the repair of TOP2-induced DNA double-strand breaks/DSBs without the need for nuclease activity, creating a 'clean' DSB with 5'-phosphate termini that are ready for ligation. Thereby, protects the transcription of many genes involved in neurological development and maintenance from the abortive activity of TOP2. Hydrolyzes 5'-phosphoglycolates on protruding 5' ends on DSBs due to DNA damage by radiation and free radicals. Has preference for single-stranded DNA or duplex DNA with a 4 base pair overhang as substrate. Acts as a regulator of ribosome biogenesis following stress. Also has 3'-tyrosyl DNA phosphodiesterase activity, but less efficiently and much slower than TDP1. Constitutes the major if not only 5'-tyrosyl-DNA phosphodiesterase in cells. Also acts as an adapter by participating in the specific activation of MAP3K7/TAK1 in response to TGF-beta: associates with components of the TGF-beta receptor-TRAF6-TAK1 signaling module and promotes their ubiquitination dependent complex formation. Involved in non-canonical TGF-beta induced signaling routes. May also act as a negative regulator of ETS1 and may inhibit NF-kappa-B activation. Its function is as follows. (Microbial infection) Used by picornaviruses to remove the small polypeptide, VPg (virus Protein genome-linked, the primer for viral RNA synthesis), from the genomic RNA of the virus. Acts as a 5'-tyrosyl RNA phosphodiesterase and cleaves the covalent VPg-Tyr-RNA bond. This cleavage would play a role in viral replication and occur in viral replication vesicles, but would not act on viral mRNA. This is Tyrosyl-DNA phosphodiesterase 2 from Homo sapiens (Human).